The following is a 427-amino-acid chain: Pectin acetylesterase 5 (427 aa).

The N-terminal stretch at 1-35 (MAIPRFSSLLRCRKWAKSDWLVASIGCVLIVFFLS) is a signal peptide. N-linked (GlcNAc...) asparagine glycosylation occurs at N173. Catalysis depends on charge relay system residues S209, D305, and H372. N-linked (GlcNAc...) asparagine glycosylation is present at N391.

Belongs to the pectinacetylesterase family.

The protein resides in the secreted. Its subcellular location is the cell wall. Hydrolyzes acetyl esters in homogalacturonan regions of pectin. In type I primary cell wall, galacturonic acid residues of pectin can be acetylated at the O-2 and O-3 positions. Decreasing the degree of acetylation of pectin gels in vitro alters their physical properties. The sequence is that of Pectin acetylesterase 5 from Arabidopsis thaliana (Mouse-ear cress).